A 193-amino-acid polypeptide reads, in one-letter code: UPF0397 protein PA0141 (193 aa).

5 helical membrane passes run 11–31, 43–63, 69–89, 109–129, and 147–167; these read VTIA…SIPI, FLVF…GLLG, FFLF…LGFL, ILFF…LIAP, and GFLV…FLMS.

It belongs to the UPF0397 family.

It localises to the cell membrane. The chain is UPF0397 protein PA0141 from Phytoplasma australiense.